The primary structure comprises 252 residues: Pyridoxine 5'-phosphate synthase (252 aa).

The 3-amino-2-oxopropyl phosphate site is built by N8 and R19. Residue H44 is the Proton acceptor of the active site. 1-deoxy-D-xylulose 5-phosphate-binding residues include R46 and H51. The active-site Proton acceptor is the E75. 1-deoxy-D-xylulose 5-phosphate is bound at residue T110. Catalysis depends on H201, which acts as the Proton donor. 3-amino-2-oxopropyl phosphate-binding positions include D202 and 224 to 225 (GH).

This sequence belongs to the PNP synthase family. In terms of assembly, homooctamer; tetramer of dimers.

The protein localises to the cytoplasm. It catalyses the reaction 3-amino-2-oxopropyl phosphate + 1-deoxy-D-xylulose 5-phosphate = pyridoxine 5'-phosphate + phosphate + 2 H2O + H(+). Its pathway is cofactor biosynthesis; pyridoxine 5'-phosphate biosynthesis; pyridoxine 5'-phosphate from D-erythrose 4-phosphate: step 5/5. Functionally, catalyzes the complicated ring closure reaction between the two acyclic compounds 1-deoxy-D-xylulose-5-phosphate (DXP) and 3-amino-2-oxopropyl phosphate (1-amino-acetone-3-phosphate or AAP) to form pyridoxine 5'-phosphate (PNP) and inorganic phosphate. In Albidiferax ferrireducens (strain ATCC BAA-621 / DSM 15236 / T118) (Rhodoferax ferrireducens), this protein is Pyridoxine 5'-phosphate synthase.